Consider the following 249-residue polypeptide: Ribonuclease PH (249 aa).

Phosphate contacts are provided by residues arginine 90 and 128 to 130 (GTR).

This sequence belongs to the RNase PH family. As to quaternary structure, homohexameric ring arranged as a trimer of dimers.

It carries out the reaction tRNA(n+1) + phosphate = tRNA(n) + a ribonucleoside 5'-diphosphate. In terms of biological role, phosphorolytic 3'-5' exoribonuclease that plays an important role in tRNA 3'-end maturation. Removes nucleotide residues following the 3'-CCA terminus of tRNAs; can also add nucleotides to the ends of RNA molecules by using nucleoside diphosphates as substrates, but this may not be physiologically important. Probably plays a role in initiation of 16S rRNA degradation (leading to ribosome degradation) during starvation. The protein is Ribonuclease PH of Parasynechococcus marenigrum (strain WH8102).